The sequence spans 102 residues: C-X-C motif chemokine 10 (102 aa).

The signal sequence occupies residues 1 to 19 (MNKSGFLIFCLILLTLSQG). The residue at position 24 (arginine 24) is a Citrulline. Disulfide bonds link cysteine 28/cysteine 55 and cysteine 30/cysteine 72.

Belongs to the intercrine alpha (chemokine CxC) family. Monomer, dimer, and tetramer. Interacts with CXCR3 (via N-terminus).

Its subcellular location is the secreted. Functionally, pro-inflammatory cytokine that is involved in a wide variety of processes such as chemotaxis, differentiation, and activation of peripheral immune cells, regulation of cell growth, apoptosis and modulation of angiostatic effects. Plays thereby an important role during viral infections by stimulating the activation and migration of immune cells to the infected sites. Mechanistically, binding of CXCL10 to the CXCR3 receptor activates G protein-mediated signaling and results in downstream activation of phospholipase C-dependent pathway, an increase in intracellular calcium production and actin reorganization. In turn, recruitment of activated Th1 lymphocytes occurs at sites of inflammation. Activation of the CXCL10/CXCR3 axis also plays an important role in neurons in response to brain injury for activating microglia, the resident macrophage population of the central nervous system, and directing them to the lesion site. This recruitment is an essential element for neuronal reorganization. This Bos taurus (Bovine) protein is C-X-C motif chemokine 10 (CXCL10).